Here is a 142-residue protein sequence, read N- to C-terminus: Endoribonuclease YbeY (142 aa).

3 residues coordinate Zn(2+): histidine 100, histidine 104, and histidine 110.

Belongs to the endoribonuclease YbeY family. Zn(2+) is required as a cofactor.

It is found in the cytoplasm. Functionally, single strand-specific metallo-endoribonuclease involved in late-stage 70S ribosome quality control and in maturation of the 3' terminus of the 16S rRNA. This Helicobacter pylori (strain G27) protein is Endoribonuclease YbeY.